We begin with the raw amino-acid sequence, 655 residues long: tRNA-guanine(15) transglycosylase (655 aa).

The Nucleophile role is filled by aspartate 89. Residues aspartate 124 and alanine 195 each coordinate substrate. Residues cysteine 281, cysteine 283, and cysteine 286 each coordinate Zn(2+). The PUA domain maps to 577–652 (KYRVVVNKEA…LAVKVRGGLK (76 aa)).

Belongs to the archaeosine tRNA-ribosyltransferase family. Requires Zn(2+) as cofactor.

The enzyme catalyses guanosine(15) in tRNA + 7-cyano-7-deazaguanine = 7-cyano-7-carbaguanosine(15) in tRNA + guanine. Its pathway is tRNA modification; archaeosine-tRNA biosynthesis. Exchanges the guanine residue with 7-cyano-7-deazaguanine (preQ0) at position 15 in the dihydrouridine loop (D-loop) of archaeal tRNAs. Can also utilize guanine as substrate. The protein is tRNA-guanine(15) transglycosylase of Methanocaldococcus jannaschii (strain ATCC 43067 / DSM 2661 / JAL-1 / JCM 10045 / NBRC 100440) (Methanococcus jannaschii).